Here is a 173-residue protein sequence, read N- to C-terminus: T cell receptor gamma constant 1 (173 aa).

The Ig-like domain maps to Pro10 to Ile104. A disulfide bond links Cys32 and Cys88. Asn66, Asn120, Asn126, and Asn135 each carry an N-linked (GlcNAc...) asparagine glycan. A helical membrane pass occupies residues Tyr139–Leu161.

As to quaternary structure, gamma-delta TR is a heterodimer composed of a gamma and delta chain; disulfide-linked. The gamma-delta TR is associated with the transmembrane signaling CD3 coreceptor proteins following the stoichiometry: a single gamma-delta TR heterodimer associates with one CD3D-CD3E heterodimer, one CD3G-CD3E heterodimer and one CD247 homodimer forming a stable octameric structure. Upon activation, gamma-delta TR complex associates with FCER1G to initiate intracellular signaling.

It localises to the cell membrane. Functionally, constant region of T cell receptor (TR) gamma chain that participates in the antigen recognition. Gamma-delta TRs recognize a variety of self and foreign non-peptide antigens frequently expressed at the epithelial boundaries between the host and external environment, including endogenous lipids presented by MH-like protein CD1D and phosphoantigens presented by butyrophilin-like molecule BTN3A1. Upon antigen recognition induces rapid, innate-like immune responses involved in pathogen clearance and tissue repair. Binding of gamma-delta TR complex to antigen triggers phosphorylation of immunoreceptor tyrosine-based activation motifs (ITAMs) in the CD3 chains by the LCK and FYN kinases, allowing the recruitment, phosphorylation, and activation of ZAP70 that facilitates phosphorylation of the scaffolding proteins LCP2 and LAT. This lead to the formation of a supramolecular signalosome that recruits the phospholipase PLCG1, resulting in calcium mobilization and ERK activation, ultimately leading to T cell expansion and differentiation into effector cells. Gamma-delta TRs are produced through somatic rearrangement of a limited repertoire of variable (V), diversity (D), and joining (J) genes. The potential diversity of gamma-delta TRs is conferred by the unique ability to rearrange (D) genes in tandem and to utilize all three reading frames. The combinatorial diversity is considerably increased by the sequence exonuclease trimming and random nucleotide (N) region additions which occur during the V-(D)-J rearrangements. In Homo sapiens (Human), this protein is T cell receptor gamma constant 1.